The sequence spans 760 residues: BMP/retinoic acid-inducible neural-specific protein 1 (760 aa).

The N-terminal stretch at 1 to 16 (MNWRFVELLYFLFVWG) is a signal peptide. Positions 68–251 (RYKIYREFAR…FVQSALSYIM (184 aa)) constitute an MACPF domain. 7 N-linked (GlcNAc...) asparagine glycosylation sites follow: Asn156, Asn433, Asn443, Asn553, Asn599, Asn630, and Asn676.

It belongs to the BRINP family. As to expression, expressed in brain. Expressed in GABAergic neurons of the pre-frontal cortex. Weakly expressed in embryonic stem (ES) cells and in ES-derived neural stem cells (NSCs).

It is found in the cytoplasm. Its function is as follows. Plays a role in neurogenesis, brain development, and the functioning of GABAergic neurons. May suppress cell cycle progression in postmitotic neurons by inhibiting G1/S transition. The polypeptide is BMP/retinoic acid-inducible neural-specific protein 1 (Brinp1) (Mus musculus (Mouse)).